The chain runs to 587 residues: APOBEC1 complementation factor (587 aa).

RRM domains lie at Cys-56 to Asp-134, Cys-136 to Pro-218, and Lys-231 to Pro-303. Residues His-360 to Lys-409 are required for nuclear localization. A Phosphothreonine modification is found at Thr-491.

Part of the apolipoprotein B mRNA editing complex with APOBEC1. Interacts with TNPO2; TNPO2 may be responsible for transport of A1CF into the nucleus. Interacts with SYNCRIP. Interacts with CELF2/CUGBP2. Interacts with RBM47.

The protein resides in the nucleus. The protein localises to the endoplasmic reticulum. Its subcellular location is the cytoplasm. In terms of biological role, essential component of the apolipoprotein B mRNA editing enzyme complex which is responsible for the postranscriptional editing of a CAA codon for Gln to a UAA codon for stop in APOB mRNA. Binds to APOB mRNA and is probably responsible for docking the catalytic subunit, APOBEC1, to the mRNA to allow it to deaminate its target cytosine. The complex also seems to protect the edited APOB mRNA from nonsense-mediated decay. This Pongo abelii (Sumatran orangutan) protein is APOBEC1 complementation factor (A1CF).